A 273-amino-acid chain; its full sequence is Putative phosphoenolpyruvate synthase regulatory protein (273 aa).

153-160 (AVSRAGKT) is an ADP binding site.

This sequence belongs to the pyruvate, phosphate/water dikinase regulatory protein family. PSRP subfamily.

The enzyme catalyses [pyruvate, water dikinase] + ADP = [pyruvate, water dikinase]-phosphate + AMP + H(+). The catalysed reaction is [pyruvate, water dikinase]-phosphate + phosphate + H(+) = [pyruvate, water dikinase] + diphosphate. Its function is as follows. Bifunctional serine/threonine kinase and phosphorylase involved in the regulation of the phosphoenolpyruvate synthase (PEPS) by catalyzing its phosphorylation/dephosphorylation. The chain is Putative phosphoenolpyruvate synthase regulatory protein from Xanthomonas oryzae pv. oryzae (strain MAFF 311018).